Consider the following 249-residue polypeptide: 1-(5-phosphoribosyl)-5-[(5-phosphoribosylamino)methylideneamino] imidazole-4-carboxamide isomerase (249 aa).

The active-site Proton acceptor is the D8. D130 serves as the catalytic Proton donor.

This sequence belongs to the HisA/HisF family.

It is found in the cytoplasm. The enzyme catalyses 1-(5-phospho-beta-D-ribosyl)-5-[(5-phospho-beta-D-ribosylamino)methylideneamino]imidazole-4-carboxamide = 5-[(5-phospho-1-deoxy-D-ribulos-1-ylimino)methylamino]-1-(5-phospho-beta-D-ribosyl)imidazole-4-carboxamide. Its pathway is amino-acid biosynthesis; L-histidine biosynthesis; L-histidine from 5-phospho-alpha-D-ribose 1-diphosphate: step 4/9. The polypeptide is 1-(5-phosphoribosyl)-5-[(5-phosphoribosylamino)methylideneamino] imidazole-4-carboxamide isomerase (Chromohalobacter salexigens (strain ATCC BAA-138 / DSM 3043 / CIP 106854 / NCIMB 13768 / 1H11)).